We begin with the raw amino-acid sequence, 150 residues long: CCAAT/enhancer-binding protein gamma (150 aa).

Lysine 3 participates in a covalent cross-link: Glycyl lysine isopeptide (Lys-Gly) (interchain with G-Cter in SUMO2). The tract at residues 27-94 is disordered; the sequence is GLQQVPQLVP…QKAQDTLQRV (68 aa). Over residues 28-37 the composition is skewed to low complexity; that stretch reads LQQVPQLVPA. Residues 56 to 72 are compositionally biased toward basic and acidic residues; that stretch reads SPMDRNSDEYRQRRERN. A bZIP domain is found at 62–125; that stretch reads SDEYRQRRER…SVLKDLFLEH (64 aa). Residues 66–93 are basic motif; sequence RQRRERNNMAVKKSRLKSKQKAQDTLQR. Positions 97–118 are leucine-zipper; that stretch reads LKEENERLEAKIKLLTKELSVL.

The protein belongs to the bZIP family. C/EBP subfamily. Binds DNA as a dimer and can form stable heterodimers with CEBPA and CEBPB. Interacts with ZNF638; this interaction increases transcriptional activation.

It localises to the nucleus. Transcription factor that binds to the promoter and the enhancer regions of target genes. Binds to the promoter and the enhancer of the alpha-1-fetoprotein gene. Binds to the enhancer element PRE-I (positive regulatory element-I) of the IL-4 gene. Binds to the promoter and the enhancer of the immunoglobulin heavy chain. Binds to GPE1, a cis-acting element in the G-CSF gene promoter. This chain is CCAAT/enhancer-binding protein gamma (Cebpg), found in Rattus norvegicus (Rat).